The primary structure comprises 472 residues: Aspartyl/glutamyl-tRNA(Asn/Gln) amidotransferase subunit B (472 aa).

It belongs to the GatB/GatE family. GatB subfamily. In terms of assembly, heterotrimer of A, B and C subunits.

It carries out the reaction L-glutamyl-tRNA(Gln) + L-glutamine + ATP + H2O = L-glutaminyl-tRNA(Gln) + L-glutamate + ADP + phosphate + H(+). The catalysed reaction is L-aspartyl-tRNA(Asn) + L-glutamine + ATP + H2O = L-asparaginyl-tRNA(Asn) + L-glutamate + ADP + phosphate + 2 H(+). In terms of biological role, allows the formation of correctly charged Asn-tRNA(Asn) or Gln-tRNA(Gln) through the transamidation of misacylated Asp-tRNA(Asn) or Glu-tRNA(Gln) in organisms which lack either or both of asparaginyl-tRNA or glutaminyl-tRNA synthetases. The reaction takes place in the presence of glutamine and ATP through an activated phospho-Asp-tRNA(Asn) or phospho-Glu-tRNA(Gln). The sequence is that of Aspartyl/glutamyl-tRNA(Asn/Gln) amidotransferase subunit B from Campylobacter jejuni subsp. jejuni serotype O:23/36 (strain 81-176).